Here is a 239-residue protein sequence, read N- to C-terminus: Probable transcriptional regulatory protein VC_A0006 (239 aa).

It belongs to the TACO1 family.

It is found in the cytoplasm. The polypeptide is Probable transcriptional regulatory protein VC_A0006 (Vibrio cholerae serotype O1 (strain ATCC 39315 / El Tor Inaba N16961)).